We begin with the raw amino-acid sequence, 111 residues long: Cell division protein FtsL (111 aa).

At 1 to 26 the chain is on the cytoplasmic side; the sequence is MAQARTEFSKVAAPRKLEEMYAQRGD. A helical membrane pass occupies residues 27-47; that stretch reads LFPYLLAVLVLLTLVSVFHVW. The Periplasmic segment spans residues 48 to 111; it reads SRVRVVDLNL…PTDQQVVVVK (64 aa). The stretch at 51-85 forms a coiled coil; it reads RVVDLNLEVAEVARQLKVAQEEQNRLKLEVASLKT.

Belongs to the FtsL family.

The protein resides in the cell inner membrane. Functionally, essential cell division protein. The sequence is that of Cell division protein FtsL from Geobacter sulfurreducens (strain ATCC 51573 / DSM 12127 / PCA).